A 314-amino-acid polypeptide reads, in one-letter code: Ribonuclease Z (314 aa).

H62, H64, D66, H67, H144, D215, and H273 together coordinate Zn(2+). The active-site Proton acceptor is D66.

This sequence belongs to the RNase Z family. Homodimer. Zn(2+) is required as a cofactor.

It carries out the reaction Endonucleolytic cleavage of RNA, removing extra 3' nucleotides from tRNA precursor, generating 3' termini of tRNAs. A 3'-hydroxy group is left at the tRNA terminus and a 5'-phosphoryl group is left at the trailer molecule.. Zinc phosphodiesterase, which displays some tRNA 3'-processing endonuclease activity. Probably involved in tRNA maturation, by removing a 3'-trailer from precursor tRNA. The sequence is that of Ribonuclease Z from Prochlorococcus marinus (strain NATL2A).